The sequence spans 243 residues: Type III pantothenate kinase (243 aa).

6–13 (DGGNTFIK) is an ATP binding site. Substrate is bound by residues Tyr-87 and 94–97 (GKDR). The active-site Proton acceptor is the Asp-96. Asp-117 is a K(+) binding site. Thr-120 contacts ATP. Substrate is bound at residue Thr-172.

The protein belongs to the type III pantothenate kinase family. Homodimer. The cofactor is NH4(+). Requires K(+) as cofactor.

It localises to the cytoplasm. The catalysed reaction is (R)-pantothenate + ATP = (R)-4'-phosphopantothenate + ADP + H(+). It participates in cofactor biosynthesis; coenzyme A biosynthesis; CoA from (R)-pantothenate: step 1/5. Its function is as follows. Catalyzes the phosphorylation of pantothenate (Pan), the first step in CoA biosynthesis. This is Type III pantothenate kinase from Christiangramia forsetii (strain DSM 17595 / CGMCC 1.15422 / KT0803) (Gramella forsetii).